The following is an 880-amino-acid chain: DNA mismatch repair protein MutS (880 aa).

635-642 (GPNMGGKS) contacts ATP.

Belongs to the DNA mismatch repair MutS family.

In terms of biological role, this protein is involved in the repair of mismatches in DNA. It is possible that it carries out the mismatch recognition step. This protein has a weak ATPase activity. This Nitrosomonas eutropha (strain DSM 101675 / C91 / Nm57) protein is DNA mismatch repair protein MutS.